A 152-amino-acid polypeptide reads, in one-letter code: MKFIILALCVAAASALSGDQIGLVQSTYGKVKGDSVGILYAVFKADPTIQAAFPQFVGKDLDAIKGGAEFSTHAGRIVGFLGGVIDDLPNIGKHVDALVATHKPRGVTHAQFNNFRAAFIAYLKGHVDYTAAVEAAWGATFDAFFGAVFAKM.

A signal peptide spans 1–15; that stretch reads MKFIILALCVAAASA. The Globin domain occupies 16–152; that stretch reads LSGDQIGLVQ…AFFGAVFAKM (137 aa). Residues histidine 73 and histidine 102 each coordinate heme b.

The protein belongs to the globin family.

The sequence is that of Globin CTT-E/E' (CTT-E) from Chironomus thummi thummi (Midge).